The following is a 1318-amino-acid chain: Major viral transcription factor ICP4 homolog (1318 aa).

A compositionally biased stretch (basic residues) spans 1 to 11 (MSAEQRKKKKT). Disordered stretches follow at residues 1 to 108 (MSAE…ADGV), 123 to 324 (EAVR…RLER), 542 to 580 (LTGA…AASP), 606 to 630 (PASA…GGRR), 780 to 873 (LAAP…TPAP), and 1291 to 1318 (AGLA…LFGE). Residues 44 to 56 (SPDPADGPPPTPN) are compositionally biased toward pro residues. Acidic residues predominate over residues 74-91 (EENEDEADDAAADADADE). Residues 133-143 (PERDGAQEEAA) show a composition bias toward basic and acidic residues. Residues 159–174 (GEENDDDDDDDDDDDR) show a composition bias toward acidic residues. Residues 206–226 (APRRHHHHHHHRRRRAPRRRS) show a composition bias toward basic residues. Low complexity-rich tracts occupy residues 228–257 (ASDS…SASS) and 268–278 (RAPASAADHAA). A compositionally biased stretch (pro residues) spans 299–308 (APRPSPPRAE). Low complexity predominate over residues 309–320 (PAPARTPAATAG). Residues 319-547 (AGRLERRRAR…ENAALTGART (229 aa)) mediate DNA binding. The span at 547 to 564 (TPDDGGDANRHDGDDARG) shows a compositional bias: basic and acidic residues. Positions 566 to 580 (PAAAAAPLPSAAASP) are enriched in low complexity. Composition is skewed to pro residues over residues 799 to 808 (ARAPPGGAPR) and 821 to 843 (AAAP…PPRP). The span at 844–863 (AALTRRPAEGPDPQGGWRRQ) shows a compositional bias: low complexity. Positions 1303 to 1318 (DMDAELEDDDDGLFGE) are enriched in acidic residues.

The protein belongs to the herpesviridae ICP4 family. Homodimer. Interacts with transcriptional regulator ICP27; this interaction is required for proper incorporation of ICP4 into virions. Interacts with host TBP; theis interaction helps the stabilization of the pre-initiation complex on specific promoters. Interacts with host GTF2B. In terms of processing, ADP-ribosylated. Post-translationally, the long stretch of Ser is a major site of phosphorylation. Only the phosphorylated forms are capable of interacting with beta or gamma genes.

It localises to the host nucleus. It is found in the host cytoplasm. The protein resides in the virion tegument. Its function is as follows. Plays an essential role in the regulation of viral gene expression by both activating and repressing host RNA polymerase II-mediated transcription. Binds with high affinity to the sequence 5'-ATCGTC-3'. Activates transcription by recruiting a form of the host TFIID to promoters and stabilizing the pre-initiation complex formation. Negatively regulates its own transcription. This immediate early (IE) protein is absolutely necessary for the transition from IE transcription to later viral gene transcription. In addition, binds to the host promoters of CXCR3 ligands including CXCL9, CXCL10, and CXCL11 and interacts with TBP to activate their transcription. In turn, mediates CD4+ T-cell migration. The sequence is that of Major viral transcription factor ICP4 homolog (ICP4) from Human herpesvirus 2 (strain HG52) (HHV-2).